Reading from the N-terminus, the 337-residue chain is tRNA N6-adenosine threonylcarbamoyltransferase (337 aa).

Positions 111 and 115 each coordinate Fe cation. Residues 134 to 138 (LVSGG), D167, G180, and N272 contribute to the substrate site. D300 is a Fe cation binding site.

Belongs to the KAE1 / TsaD family. Requires Fe(2+) as cofactor.

It is found in the cytoplasm. It catalyses the reaction L-threonylcarbamoyladenylate + adenosine(37) in tRNA = N(6)-L-threonylcarbamoyladenosine(37) in tRNA + AMP + H(+). Its function is as follows. Required for the formation of a threonylcarbamoyl group on adenosine at position 37 (t(6)A37) in tRNAs that read codons beginning with adenine. Is involved in the transfer of the threonylcarbamoyl moiety of threonylcarbamoyl-AMP (TC-AMP) to the N6 group of A37, together with TsaE and TsaB. TsaD likely plays a direct catalytic role in this reaction. The protein is tRNA N6-adenosine threonylcarbamoyltransferase of Salmonella typhi.